The chain runs to 147 residues: 6,7-dimethyl-8-ribityllumazine synthase (147 aa).

5-amino-6-(D-ribitylamino)uracil-binding positions include phenylalanine 16, 48–50 (TFD), and 73–75 (AVI). 78–79 (DT) contributes to the (2S)-2-hydroxy-3-oxobutyl phosphate binding site. Histidine 81 serves as the catalytic Proton donor. Residue leucine 106 coordinates 5-amino-6-(D-ribitylamino)uracil. Arginine 121 is a binding site for (2S)-2-hydroxy-3-oxobutyl phosphate.

It belongs to the DMRL synthase family.

The enzyme catalyses (2S)-2-hydroxy-3-oxobutyl phosphate + 5-amino-6-(D-ribitylamino)uracil = 6,7-dimethyl-8-(1-D-ribityl)lumazine + phosphate + 2 H2O + H(+). It functions in the pathway cofactor biosynthesis; riboflavin biosynthesis; riboflavin from 2-hydroxy-3-oxobutyl phosphate and 5-amino-6-(D-ribitylamino)uracil: step 1/2. Catalyzes the formation of 6,7-dimethyl-8-ribityllumazine by condensation of 5-amino-6-(D-ribitylamino)uracil with 3,4-dihydroxy-2-butanone 4-phosphate. This is the penultimate step in the biosynthesis of riboflavin. The sequence is that of 6,7-dimethyl-8-ribityllumazine synthase from Aeropyrum pernix (strain ATCC 700893 / DSM 11879 / JCM 9820 / NBRC 100138 / K1).